The following is a 315-amino-acid chain: Voltage-dependent calcium channel gamma-3 subunit (315 aa).

A run of 4 helical transmembrane segments spans residues 8 to 28 (VQML…TIAV), 104 to 124 (SSVF…CVAA), 135 to 155 (ILSA…GIIV), and 181 to 201 (FGAF…HIYI). The tract at residues 232–252 (RRRSSSRSTEPRSRDLSPISK) is disordered. At serine 248 the chain carries Phosphoserine.

It belongs to the PMP-22/EMP/MP20 family. CACNG subfamily. In terms of assembly, the L-type calcium channel is composed of five subunits: alpha-1, alpha-2/delta, beta and gamma. Acts as an auxiliary subunit for AMPA-selective glutamate receptors (AMPARs). Found in a complex with GRIA1, GRIA2, GRIA3, GRIA4, CNIH2, CNIH3, CACNG2, CACNG4, CACNG5, CACNG7 and CACNG8. Interacts with AP4M1 and GRIA1; associates GRIA1 with the adaptor protein complex 4 (AP-4) to target GRIA1 to the somatodendritic compartment of neurons.

Its subcellular location is the membrane. Regulates the trafficking and gating properties of AMPA-selective glutamate receptors (AMPARs). Promotes their targeting to the cell membrane and synapses and modulates their gating properties by slowing their rates of activation, deactivation and desensitization. Does not show subunit-specific AMPA receptor regulation and regulates all AMPAR subunits. Thought to stabilize the calcium channel in an inactivated (closed) state. The sequence is that of Voltage-dependent calcium channel gamma-3 subunit (CACNG3) from Bos taurus (Bovine).